A 115-amino-acid polypeptide reads, in one-letter code: Replication initiation control protein YabA (115 aa).

4 residues coordinate Zn(2+): H90, C92, C106, and C109.

The protein belongs to the YabA family. As to quaternary structure, homotetramer. Interacts with both DnaA and DnaN, acting as a bridge between these two proteins. It depends on Zn(2+) as a cofactor.

It is found in the cytoplasm. Its subcellular location is the nucleoid. In terms of biological role, involved in control of chromosome replication initiation. Inhibits the cooperative binding of DnaA to the oriC region, thus negatively regulating initiation of chromosome replication. Inhibits the ability of DnaA-ATP to form a helix on DNA; does not disassemble preformed DnaA-DNA helices. Decreases the residence time of DnaA on the chromosome at its binding sites (oriC, replication forks and promoter-binding sites). Tethers DnaA to the replication machinery via the DNA polymerase beta sliding clamp subunit (dnaN). Associates with oriC and other DnaA targets on the chromosome in a DnaA-dependent manner. This chain is Replication initiation control protein YabA, found in Staphylococcus aureus (strain JH1).